A 161-amino-acid polypeptide reads, in one-letter code: Small ribosomal subunit protein uS19 (161 aa).

Residues 1-19 (MARQKKYSGKGGARKKNKQ) show a composition bias toward basic residues. Positions 1 to 26 (MARQKKYSGKGGARKKNKQKQNVAPR) are disordered.

The protein belongs to the universal ribosomal protein uS19 family.

Its function is as follows. Protein S19 forms a complex with S13 that binds strongly to the 16S ribosomal RNA. This is Small ribosomal subunit protein uS19 from Methanococcus maripaludis (strain C5 / ATCC BAA-1333).